A 146-amino-acid chain; its full sequence is Hemoglobin subunit beta-A/B (146 aa).

An N-acetylserine; in variant beta-B modification is found at glycine 1. The Globin domain maps to 2–146 (FLTAEEKGLV…VANALAHKYH (145 aa)). Position 44 is a phosphoserine (serine 44). Lysine 59 bears the N6-acetyllysine mark. Histidine 63 serves as a coordination point for heme b. Residue lysine 82 is modified to N6-acetyllysine. Histidine 92 is a heme b binding site. At cysteine 93 the chain carries S-nitrosocysteine. At lysine 144 the chain carries N6-acetyllysine.

The protein belongs to the globin family. As to quaternary structure, heterotetramer of two alpha chains and two beta chains. As to expression, red blood cells.

In terms of biological role, involved in oxygen transport from the lung to the various peripheral tissues. The chain is Hemoglobin subunit beta-A/B (HBB) from Felis catus (Cat).